Reading from the N-terminus, the 706-residue chain is Translation initiation factor IF-2 (706 aa).

A compositionally biased stretch (basic and acidic residues) spans 55-81 (AKETANEKPAEQKKQSSNKINDRKKND). The interval 55–127 (AKETANEKPA…KPKKELPEKI (73 aa)) is disordered. Positions 82–98 (VQNNQFNKNKKNNNQNK) are enriched in low complexity. The region spanning 207 to 376 (VRPPVVTIMG…LLVSEVGELK (170 aa)) is the tr-type G domain. Residues 216–223 (GHVDHGKT) form a G1 region. A GTP-binding site is contributed by 216 to 223 (GHVDHGKT). Residues 241–245 (GITQH) are G2. Positions 262–265 (DTPG) are G3. Residues 262–266 (DTPGH) and 316–319 (NKID) each bind GTP. The tract at residues 316–319 (NKID) is G4. The segment at 352 to 354 (SAK) is G5.

The protein belongs to the TRAFAC class translation factor GTPase superfamily. Classic translation factor GTPase family. IF-2 subfamily.

It is found in the cytoplasm. Functionally, one of the essential components for the initiation of protein synthesis. Protects formylmethionyl-tRNA from spontaneous hydrolysis and promotes its binding to the 30S ribosomal subunits. Also involved in the hydrolysis of GTP during the formation of the 70S ribosomal complex. This is Translation initiation factor IF-2 from Bacillus pumilus (strain SAFR-032).